Here is a 173-residue protein sequence, read N- to C-terminus: Glutamyl-tRNA(Gln) amidotransferase subunit C-1, mitochondrial (173 aa).

Residues 1–23 (MIRIPFRLRPPPGRTLHSLVRTF) constitute a mitochondrion transit peptide. The disordered stretch occupies residues 51 to 70 (PSKVPQRPHKSTTTVGQSTP). Polar residues predominate over residues 61-70 (STTTVGQSTP).

It belongs to the GatC family. In terms of assembly, subunit of the heterotrimeric GatCAB amidotransferase (AdT) complex, composed of A, B and C subunits.

It localises to the mitochondrion. The enzyme catalyses L-glutamyl-tRNA(Gln) + L-glutamine + ATP + H2O = L-glutaminyl-tRNA(Gln) + L-glutamate + ADP + phosphate + H(+). Allows the formation of correctly charged Gln-tRNA(Gln) through the transamidation of misacylated Glu-tRNA(Gln) in the mitochondria. The reaction takes place in the presence of glutamine and ATP through an activated gamma-phospho-Glu-tRNA(Gln). The polypeptide is Glutamyl-tRNA(Gln) amidotransferase subunit C-1, mitochondrial (Culex quinquefasciatus (Southern house mosquito)).